The following is a 335-amino-acid chain: Phosphatidylcholine-sterol acyltransferase (335 aa).

Residues 1–18 (MKKWFVCLLGLVALTVQA) form the signal peptide. Catalysis depends on S34, which acts as the Nucleophile. Catalysis depends on residues D306 and H309.

The protein belongs to the 'GDSL' lipolytic enzyme family.

It catalyses the reaction a sterol + a 1,2-diacyl-sn-glycero-3-phosphocholine = a sterol ester + a 1-acyl-sn-glycero-3-phosphocholine. Functionally, fatty acid transfer between phosphatidylcholine and cholesterol. The polypeptide is Phosphatidylcholine-sterol acyltransferase (Aeromonas hydrophila).